The following is a 671-amino-acid chain: Probable potassium transport system protein Kup 2 (671 aa).

The next 12 membrane-spanning stretches (helical) occupy residues 18 to 38 (GFLIALGIVYGDIGTSPLYAM), 60 to 80 (VSLVIWTLTLITTVKYVLIAL), 103 to 123 (WLIVPAMIGGATLLADGALTP), 149 to 169 (VTTLIILAFLFLIQRFGASLV), 173 to 193 (FGPIMFIWFGFLGVSGLINSF), 218 to 238 (AGFFILGSIFLVTTGAEALYS), 252 to 272 (WPFVKICIILSYCGQGAWLLA), 292 to 312 (MVIYVVILSTLAAIIASQALI), 343 to 363 (LYIPAVNFALWVTTSFFVLYF), 373 to 393 (YSLAITITMLMTTTLLTYFLI), 402 to 422 (IAFISIGLFCIEGSFFAASLV), and 424 to 444 (FINGAYIVVLIALAIIFVMFI).

The protein belongs to the HAK/KUP transporter (TC 2.A.72) family.

It localises to the cell membrane. The catalysed reaction is K(+)(in) + H(+)(in) = K(+)(out) + H(+)(out). Its function is as follows. Transport of potassium into the cell. Likely operates as a K(+):H(+) symporter. In Lactococcus lactis subsp. cremoris (strain MG1363), this protein is Probable potassium transport system protein Kup 2.